A 435-amino-acid chain; its full sequence is Nucleoredoxin (435 aa).

N-acetylserine is present on S2. Residues 167–321 form the Thioredoxin domain; that stretch reads PKPFREVIAG…VLELSDSNAV (155 aa).

It belongs to the nucleoredoxin family. Associates with the phosphatase 2A holoenzyme. Interacts with PPP2CA; the interaction is direct. Interacts with DVL1 (via PDZ domain); the interaction is direct and regulated by oxidative stress.

The protein localises to the cytoplasm. Its subcellular location is the cytosol. The protein resides in the nucleus. The enzyme catalyses [protein]-dithiol + NAD(+) = [protein]-disulfide + NADH + H(+). It carries out the reaction [protein]-dithiol + NADP(+) = [protein]-disulfide + NADPH + H(+). Its function is as follows. Functions as a redox-dependent negative regulator of the Wnt signaling pathway, possibly by preventing ubiquitination of DVL3 by the BCR(KLHL12) complex. May also function as a transcriptional regulator act as a regulator of protein phosphatase 2A (PP2A). This is Nucleoredoxin (NXN) from Bos taurus (Bovine).